We begin with the raw amino-acid sequence, 328 residues long: Ribosomal RNA small subunit methyltransferase H (328 aa).

Residues 37-39 (GGH), Asp57, Phe83, Asp104, and Gln111 contribute to the S-adenosyl-L-methionine site.

The protein belongs to the methyltransferase superfamily. RsmH family.

The protein localises to the cytoplasm. The catalysed reaction is cytidine(1402) in 16S rRNA + S-adenosyl-L-methionine = N(4)-methylcytidine(1402) in 16S rRNA + S-adenosyl-L-homocysteine + H(+). Its function is as follows. Specifically methylates the N4 position of cytidine in position 1402 (C1402) of 16S rRNA. This Neisseria meningitidis serogroup C / serotype 2a (strain ATCC 700532 / DSM 15464 / FAM18) protein is Ribosomal RNA small subunit methyltransferase H.